Reading from the N-terminus, the 409-residue chain is Gamma-glutamyl phosphate reductase (409 aa).

It belongs to the gamma-glutamyl phosphate reductase family.

The protein resides in the cytoplasm. The catalysed reaction is L-glutamate 5-semialdehyde + phosphate + NADP(+) = L-glutamyl 5-phosphate + NADPH + H(+). It participates in amino-acid biosynthesis; L-proline biosynthesis; L-glutamate 5-semialdehyde from L-glutamate: step 2/2. Catalyzes the NADPH-dependent reduction of L-glutamate 5-phosphate into L-glutamate 5-semialdehyde and phosphate. The product spontaneously undergoes cyclization to form 1-pyrroline-5-carboxylate. The polypeptide is Gamma-glutamyl phosphate reductase (Koribacter versatilis (strain Ellin345)).